We begin with the raw amino-acid sequence, 1120 residues long: ELKS/Rab6-interacting/CAST family member 1 (1120 aa).

The tract at residues 1 to 54 (MYGSARSVGKVEPSSQSPGRSPRLPRSPRLGHRRTNSTGGSSGNSVGGGSGKTL) is disordered. The residue at position 10 (Lys10) is an N6-acetyllysine. Residues 13-28 (PSSQSPGRSPRLPRSP) are compositionally biased toward low complexity. Ser17, Ser21, and Ser37 each carry phosphoserine. The residue at position 38 (Thr38) is a Phosphothreonine. Over residues 40-51 (GSSGNSVGGGSG) the composition is skewed to gly residues. Phosphoserine occurs at positions 55, 75, 94, 824, 965, and 1009. Positions 144–992 (RQARDNTIMD…RMKLMADNYE (849 aa)) form a coiled coil. The segment covering 801–824 (KHKEQVEKKKSAQMLEEARRREDS) has biased composition (basic and acidic residues). The segment at 801 to 840 (KHKEQVEKKKSAQMLEEARRREDSLSDSSQQLQDSLRKKD) is disordered. Thr1050 is subject to Phosphothreonine. One can recognise an FIP-RBD domain in the interval 1050–1112 (TPPASYNADG…DHCPDILEQV (63 aa)). A coiled-coil region spans residues 1060–1104 (EQAAWENELQQMTQEQLQNELEKVEGDNAELQEFANTILQQIADH).

In terms of assembly, interacts with the GTB-bound forms of RAB6A isoform 1 and isoform 2 and with RAB6B. The interaction was strongest with RAB6B, followed by RAB6A isoform 2 and weakest with RAB6A isoform 1. Part of a complex with CHUK, IKBKB and IKBKG. Interacts with CHUK, IKBKB and IKBKG. The interaction with IKBKG is independent of CHUK and IKBKB. Interacts with NFKBIA. Isoform 2 interacts through its C-terminus with the PDZ domains of RIMS1 and RIMS2. Interacts with ERC2/CAST1. Interacts with SDCCAG8. Part of a cortical microtubule stabilization complex (CMSC) composed of KANK1, PPFIA1, PPFIBP1, ERC1/ELKS, PHLDB2/LL5beta, CLASPs, KIF21A and possibly additional interactors; within CMSCs KANK1 and PHLDB2/LL5beta appear to be the core components for targeting of microtubule-binding proteins KIF21A and CLASPs, whereas PPFIA1, PPFIBP1 and ERC1/ELKS serve as scaffolds for protein clustering. Widely expressed.

It localises to the cytoplasm. Its subcellular location is the cytoskeleton. The protein resides in the microtubule organizing center. It is found in the centrosome. The protein localises to the membrane. It localises to the golgi apparatus membrane. Its subcellular location is the presynaptic active zone. The protein resides in the cell projection. It is found in the podosome. Its function is as follows. Regulatory subunit of the IKK complex. Probably recruits IkappaBalpha/NFKBIA to the complex. May be involved in the organization of the cytomatrix at the nerve terminals active zone (CAZ) which regulates neurotransmitter release. May be involved in vesicle trafficking at the CAZ. May be involved in Rab-6 regulated endosomes to Golgi transport. The protein is ELKS/Rab6-interacting/CAST family member 1 of Mus musculus (Mouse).